We begin with the raw amino-acid sequence, 118 residues long: Putative pterin-4-alpha-carbinolamine dehydratase (118 aa).

Belongs to the pterin-4-alpha-carbinolamine dehydratase family.

It catalyses the reaction (4aS,6R)-4a-hydroxy-L-erythro-5,6,7,8-tetrahydrobiopterin = (6R)-L-erythro-6,7-dihydrobiopterin + H2O. The chain is Putative pterin-4-alpha-carbinolamine dehydratase from Pseudomonas fluorescens (strain ATCC BAA-477 / NRRL B-23932 / Pf-5).